We begin with the raw amino-acid sequence, 600 residues long: DDB1- and CUL4-associated factor 15 (600 aa).

Positions 1–30 (MAPSSKSERNSGAGSGGGGPGGAGGKRAAG) are disordered. The span at 13–27 (AGSGGGGPGGAGGKR) shows a compositional bias: gly residues. Serine 50 carries the post-translational modification Phosphoserine. Zn(2+)-binding residues include cysteine 193, cysteine 196, cysteine 211, and histidine 214. E7820 is bound by residues phenylalanine 231 and 234 to 235 (AF). The segment covering 280 to 295 (PASPPEPQSPELPPAL) has biased composition (pro residues). Positions 280–316 (PASPPEPQSPELPPALPSFCPEAAPARSSGSPEPSPA) are disordered. 2 positions are modified to phosphoserine: serine 310 and serine 314.

In terms of assembly, component of the DCX(DCAF15) complex, also named CLR4(DCAF15) complex, composed of DCAF15, DDB1, cullin-4 (CUL4A or CUL4B), DDA1 and RBX1.

The protein operates within protein modification; protein ubiquitination. Its activity is regulated as follows. Aryl sulfonamide anticancer drugs change the substrate specificity of DCAF15 by acting as a molecular glue that promotes binding between DCAF15 and weak affinity interactors, such as RBM39. Functionally, substrate-recognition component of the DCX(DCAF15) complex, a cullin-4-RING E3 ubiquitin-protein ligase complex that mediates ubiquitination and degradation of target proteins. The DCX(DCAF15) complex acts as a regulator of the natural killer (NK) cells effector functions, possibly by mediating ubiquitination and degradation of cohesin subunits SMC1A and SMC3. May play a role in the activation of antigen-presenting cells (APC) and their interaction with NK cells. Binding of aryl sulfonamide anticancer drugs, such as indisulam (E7070) or E7820, change the substrate specificity of the DCX(DCAF15) complex, leading to promote ubiquitination and degradation of splicing factor RBM39. RBM39 degradation results in splicing defects and death in cancer cell lines. Aryl sulfonamide anticancer drugs change the substrate specificity of DCAF15 by acting as a molecular glue that promotes binding between DCAF15 and weak affinity interactor RBM39. Aryl sulfonamide anticancer drugs also promote ubiquitination and degradation of RBM23 and PRPF39. The chain is DDB1- and CUL4-associated factor 15 from Homo sapiens (Human).